Reading from the N-terminus, the 269-residue chain is C-type lectin domain family 1 member A (269 aa).

Residues 1 to 51 are Cytoplasmic-facing; sequence MQAKYSSTRDMLDDDDTTISLYSGTSTVTRRAEPRHSENGTPSSVWRPVAL. Residues 52-72 traverse the membrane as a helical; Signal-anchor for type II membrane protein segment; that stretch reads TLLTLCLVLLVGLAALGLVFF. Residues 73–269 are Extracellular-facing; it reads QFYQLSNIQQ…AGRVVPGELQ (197 aa). Asn-94, Asn-126, Asn-168, and Asn-202 each carry an N-linked (GlcNAc...) asparagine glycan. One can recognise a C-type lectin domain in the interval 143-257; it reads YGDKCYQFYK…CKELRRCACE (115 aa). Cystine bridges form between Cys-164–Cys-256 and Cys-235–Cys-248.

It is found in the membrane. The polypeptide is C-type lectin domain family 1 member A (Clec1a) (Mus musculus (Mouse)).